Consider the following 257-residue polypeptide: Probable septum site-determining protein MinC (257 aa).

Over residues 123-141 (AVEAAAAPAAEPTPEPGAA) the composition is skewed to low complexity. Residues 123-144 (AVEAAAAPAAEPTPEPGAASQP) are disordered.

It belongs to the MinC family. Interacts with MinD and FtsZ.

Functionally, cell division inhibitor that blocks the formation of polar Z ring septums. Rapidly oscillates between the poles of the cell to destabilize FtsZ filaments that have formed before they mature into polar Z rings. Prevents FtsZ polymerization. This is Probable septum site-determining protein MinC from Burkholderia multivorans (strain ATCC 17616 / 249).